The sequence spans 79 residues: Sulfur carrier protein TusA (79 aa).

The active-site Cysteine persulfide intermediate is the Cys17.

This sequence belongs to the sulfur carrier protein TusA family.

The protein resides in the cytoplasm. In terms of biological role, sulfur carrier protein which probably makes part of a sulfur-relay system. This is Sulfur carrier protein TusA from Pasteurella multocida (strain Pm70).